The chain runs to 321 residues: CRISPR-associated endonuclease Cas1 2 (321 aa).

Mn(2+) is bound by residues E150, H213, and E228.

This sequence belongs to the CRISPR-associated endonuclease Cas1 family. In terms of assembly, homodimer, forms a heterotetramer with a Cas2 homodimer. Mg(2+) serves as cofactor. Mn(2+) is required as a cofactor.

Functionally, CRISPR (clustered regularly interspaced short palindromic repeat), is an adaptive immune system that provides protection against mobile genetic elements (viruses, transposable elements and conjugative plasmids). CRISPR clusters contain spacers, sequences complementary to antecedent mobile elements, and target invading nucleic acids. CRISPR clusters are transcribed and processed into CRISPR RNA (crRNA). Acts as a dsDNA endonuclease. Involved in the integration of spacer DNA into the CRISPR cassette. The protein is CRISPR-associated endonuclease Cas1 2 of Moorella thermoacetica (strain ATCC 39073 / JCM 9320).